The primary structure comprises 551 residues: Synapse-associated protein of 47 kDa (551 aa).

Disordered regions lie at residues 20 to 72 (AGDE…AGKR) and 117 to 198 (AMPA…GQGK). Low complexity-rich tracts occupy residues 26–59 (PAPTGDAPAAAPAASTSVEATASSAVDPEAAAAA), 117–128 (AMPAMPSIPSIP), and 137–146 (DGAEGAEGAV). Phosphoserine is present on residues Ser178 and Ser182. Gly residues predominate over residues 182–197 (SGGGTPTGDEGQIGQG). Residue Thr186 is modified to Phosphothreonine. One can recognise a BSD domain in the interval 295–347 (VDFEFSYDTAYPTAIAIMAEDKALETMRFELVPKIITEENFWRNYFYRVSLII). Residues 360–391 (VGQASSGEDANEVATKEKKSKTAEPAKGDSSV) form a disordered region. Residues 373 to 386 (ATKEKKSKTAEPAK) show a composition bias toward basic and acidic residues. The residue at position 433 (Ser433) is a Phosphoserine. The segment at 487–551 (KDYEVVDEGG…DLIEDTDDLK (65 aa)) is disordered. The segment covering 514–523 (DDTEADEDEP) has biased composition (acidic residues). The span at 524 to 535 (TISNLRTRSTNN) shows a compositional bias: polar residues. Thr530 carries the phosphothreonine modification. Acidic residues predominate over residues 536–551 (DWEEYADLIEDTDDLK).

As to expression, expressed specifically in neurons and transported to synaptic terminals.

This chain is Synapse-associated protein of 47 kDa (Sap47), found in Drosophila melanogaster (Fruit fly).